Consider the following 256-residue polypeptide: Imidazole glycerol phosphate synthase subunit HisF (256 aa).

Catalysis depends on residues Asp11 and Asp130.

It belongs to the HisA/HisF family. In terms of assembly, heterodimer of HisH and HisF.

It is found in the cytoplasm. The catalysed reaction is 5-[(5-phospho-1-deoxy-D-ribulos-1-ylimino)methylamino]-1-(5-phospho-beta-D-ribosyl)imidazole-4-carboxamide + L-glutamine = D-erythro-1-(imidazol-4-yl)glycerol 3-phosphate + 5-amino-1-(5-phospho-beta-D-ribosyl)imidazole-4-carboxamide + L-glutamate + H(+). It participates in amino-acid biosynthesis; L-histidine biosynthesis; L-histidine from 5-phospho-alpha-D-ribose 1-diphosphate: step 5/9. Its function is as follows. IGPS catalyzes the conversion of PRFAR and glutamine to IGP, AICAR and glutamate. The HisF subunit catalyzes the cyclization activity that produces IGP and AICAR from PRFAR using the ammonia provided by the HisH subunit. The protein is Imidazole glycerol phosphate synthase subunit HisF of Prochlorococcus marinus (strain AS9601).